A 394-amino-acid polypeptide reads, in one-letter code: uncharacterized protein (394 aa).

This is an uncharacterized protein from Bacillus subtilis (strain 168).